Reading from the N-terminus, the 221-residue chain is Probable transaldolase (221 aa).

The Schiff-base intermediate with substrate role is filled by Lys-83.

The protein belongs to the transaldolase family. Type 3B subfamily.

The protein resides in the cytoplasm. The catalysed reaction is D-sedoheptulose 7-phosphate + D-glyceraldehyde 3-phosphate = D-erythrose 4-phosphate + beta-D-fructose 6-phosphate. It functions in the pathway carbohydrate degradation; pentose phosphate pathway; D-glyceraldehyde 3-phosphate and beta-D-fructose 6-phosphate from D-ribose 5-phosphate and D-xylulose 5-phosphate (non-oxidative stage): step 2/3. Transaldolase is important for the balance of metabolites in the pentose-phosphate pathway. This Petrotoga mobilis (strain DSM 10674 / SJ95) protein is Probable transaldolase.